Here is a 1018-residue protein sequence, read N- to C-terminus: 2-oxoglutarate dehydrogenase-like, mitochondrial (1018 aa).

Ca(2+) contacts are provided by histidine 138, aspartate 151, and aspartate 153. Thiamine diphosphate-binding residues include arginine 307, aspartate 406, asparagine 439, isoleucine 441, and glutamine 671. Residues aspartate 406, asparagine 439, and isoleucine 441 each coordinate Mg(2+).

Belongs to the alpha-ketoglutarate dehydrogenase family. The OGDHC complex comprises multiple copies of three catalytic enzyme components, the 2-oxoglutarate dehydrogenase (OGDH/E1), the dihydrolipoamide dehydrogenase (DLST/E2) and the dihydrolipoamide dehydrogenase (DLD/E3). OGDHL/E1-like isoenzyme may replace OGDH in the OGDHC complex in the brain. Thiamine diphosphate serves as cofactor. Mg(2+) is required as a cofactor.

It is found in the mitochondrion matrix. It catalyses the reaction N(6)-[(R)-lipoyl]-L-lysyl-[protein] + 2-oxoglutarate + H(+) = N(6)-[(R)-S(8)-succinyldihydrolipoyl]-L-lysyl-[protein] + CO2. 2-oxoglutarate dehydrogenase (E1-like) component of the 2-oxoglutarate dehydrogenase multienzyme complex (OGDHC) which mediates the decarboxylation of alpha-ketoglutarate in the tricarboxylic acid cycle. The OGDHC complex catalyzes the overall conversion of 2-oxoglutarate to succinyl-CoA and CO(2) while reducing NAD(+) to NADH. The OGDHC complex is mainly active in the mitochondrion. Involved in the inhibition of cell proliferation and in apoptosis. In Xenopus laevis (African clawed frog), this protein is 2-oxoglutarate dehydrogenase-like, mitochondrial (ogdhl).